A 737-amino-acid chain; its full sequence is Serine/threonine-protein kinase dst1 (737 aa).

Residues 29 to 281 enclose the Protein kinase domain; it reads YHIQERLGKG…AKELLNHEFI (253 aa). ATP contacts are provided by residues 35–43 and Lys-58; that span reads LGKGSFGQV. The active-site Proton acceptor is the Asp-149. Disordered stretches follow at residues 305-356, 372-475, 491-559, and 575-631; these read SMFE…SNNY, KDDA…TTDQ, KPIT…ISNN, and NNNI…ESLS. Composition is skewed to low complexity over residues 334 to 345, 401 to 410, 425 to 444, and 454 to 473; these read NNNTVTNYSTVI, SSCSSSSSSS, PITNSPKISPISSNNINKIP, and ATTTTTTTTTTTTTAASTTT. Positions 491–503 are enriched in polar residues; it reads KPITSSNSTSVTP. Residues 510–525 are compositionally biased toward low complexity; the sequence is SNNTTTTSNINTPIKP. 2 stretches are compositionally biased toward polar residues: residues 529–554 and 585–596; these read LKKSNSNTPVQLKTSGDKTPTTTPLK and SPTTGQKIIKTN. The segment covering 597–615 has biased composition (low complexity); it reads SGGVLKSSGGLSSKRSPSS.

This sequence belongs to the protein kinase superfamily. STE Ser/Thr protein kinase family. STE20 subfamily. Mg(2+) serves as cofactor.

It catalyses the reaction L-seryl-[protein] + ATP = O-phospho-L-seryl-[protein] + ADP + H(+). The enzyme catalyses L-threonyl-[protein] + ATP = O-phospho-L-threonyl-[protein] + ADP + H(+). In Dictyostelium discoideum (Social amoeba), this protein is Serine/threonine-protein kinase dst1.